A 245-amino-acid chain; its full sequence is MTEVLYFLDCYLREFEAIVEKVTDDKYVVLDRTAFYPESGGQPSDTGKLVREEDGAEFEVVYVGKFNGDISHEITPVDGNAALGLKAGDRVRGIIDWDRRYRHMRMHTATHVIANVIEKEAGAQITGNQLGLDKSRVDFSLEAFDRDKFAEYEKIANKVITENHPVNLYLVSRKEAEEKLSRLTTLAKGFSEEISEVRLVEIEGITIEACGGTHLKNTGEIKGIKIEKLQNKGKSNRRMYFTLLD.

Zn(2+) is bound by residues histidine 107, histidine 111, cysteine 210, and histidine 214.

This sequence belongs to the class-II aminoacyl-tRNA synthetase family. Editing domain AlaX-M subfamily. Zn(2+) serves as cofactor.

It is found in the cytoplasm. In terms of biological role, functions in trans to edit the amino acid moiety from mischarged charged tRNA(Ala). The polypeptide is Alanyl-tRNA editing protein AlaX-M (alaXM) (Methanosarcina acetivorans (strain ATCC 35395 / DSM 2834 / JCM 12185 / C2A)).